The following is a 263-amino-acid chain: Methylesterase 4 (263 aa).

Catalysis depends on S84, which acts as the Acyl-ester intermediate. Catalysis depends on charge relay system residues D213 and H241.

It belongs to the AB hydrolase superfamily. Methylesterase family.

The catalysed reaction is methyl salicylate + H2O = salicylate + methanol + H(+). Its pathway is plant hormone biosynthesis. Its activity is regulated as follows. Esterase activity is down-regulated by salicylic acid (SA). In terms of biological role, methylesterase shown to have carboxylesterase activity and methyl salicylate (MeSA) esterase activity in vitro. The protein is Methylesterase 4 of Arabidopsis thaliana (Mouse-ear cress).